The primary structure comprises 1489 residues: Calmodulin-regulated spectrin-associated protein 2 (1489 aa).

The Calponin-homology (CH) domain occupies 222–335 (WKLVPARYRK…FMAELFWWFE (114 aa)). The tract at residues 375-415 (SSDFPSSGEGATFTQSHHHLPSRYSRPQAHSSASGGIRRSS) is disordered. Positions 405 to 415 (SSASGGIRRSS) are enriched in low complexity. 2 positions are modified to phosphoserine: Ser-416 and Ser-418. At Thr-426 the chain carries Phosphothreonine. Phosphoserine is present on residues Ser-464, Ser-598, Ser-599, Ser-611, and Ser-673. Disordered regions lie at residues 611–639 (SPITDNTEVDTGIHVPSEDIPETMDEDSS) and 668–730 (TREA…GSEL). Residues 668-679 (TREALSPCPSTV) are compositionally biased toward polar residues. Position 678 is a phosphothreonine (Thr-678). Residue Ser-680 is modified to Phosphoserine. Residues 680–699 (STKSQPGSSASSSSGVKMTS) show a composition bias toward low complexity. The segment covering 703-713 (QKFRKLNHTDG) has biased composition (basic and acidic residues). The stretch at 756–793 (LLASEMVHLRMKLEEKRRAIEAQKKKMEAAFTKQRQKM) forms a coiled coil. A disordered region spans residues 812-844 (LREEAAGAEDEKVYTDRAKEKESQKTDGQRSKS). Phosphoserine is present on Ser-862. Residues 887 to 926 (EILEYTKSIEKLNSSLHFLQQEMQRLSLQQEMLMQMREQQ) adopt a coiled-coil conformation. Residues 922–1034 (MREQQSWVIS…IQTRSFVCFG (113 aa)) are MBD region. The tract at residues 925–1017 (QQSWVISPPQ…SVDSLPRLRR (93 aa)) is disordered. Phosphoserine is present on residues Ser-931 and Ser-936. Residues 960 to 989 (SSDSPRPTHPSPQSSNRKSASFSVKSQRTP) show a composition bias toward polar residues. Thr-997, Thr-1002, and Thr-1004 each carry phosphothreonine. Phosphoserine is present on residues Ser-1008 and Ser-1019. Disordered regions lie at residues 1032 to 1078 (CFGD…PFES), 1096 to 1152 (PNED…DKEQ), and 1191 to 1349 (KETQ…EYTG). Positions 1039-1075 (PQLKESKPKEEVKKEELESKGTLEQRGHNPEEKEIKP) are enriched in basic and acidic residues. Positions 1105-1117 (TEPPPKPVFPPTA) are enriched in pro residues. Composition is skewed to basic and acidic residues over residues 1132–1152 (KPPEKADVPVEKYDGESDKEQ) and 1191–1252 (KETQ…DTVI). Ser-1148 is subject to Phosphoserine. Residues 1166–1238 (KDDQKAENDM…REFIRQEYMR (73 aa)) adopt a coiled-coil conformation. The span at 1287-1299 (SSLSLASLNTGDN) shows a compositional bias: polar residues. 3 positions are modified to phosphoserine: Ser-1313, Ser-1319, and Ser-1321. Positions 1334-1346 (NASTTSSVASGTE) are enriched in polar residues. A CKK domain is found at 1349–1483 (GPKLYKEPSA…QTKRPVTPKK (135 aa)).

Belongs to the CAMSAP1 family. Interacts with CAMSAP3. Interacts with KATNA1 and KATNB1; leading to regulate the length of CAMSAP2-decorated microtubule stretches. Interacts with a complex formed by AKAP9 and PDE4DIP isoform 13/MMG8/SMYLE, which recruits CAMSAP2 to the Golgi. Interacts with MAPRE1/EB1.

It is found in the cytoplasm. The protein resides in the cytoskeleton. Its subcellular location is the golgi apparatus. The protein localises to the cilium basal body. Functionally, key microtubule-organizing protein that specifically binds the minus-end of non-centrosomal microtubules and regulates their dynamics and organization. Specifically recognizes growing microtubule minus-ends and autonomously decorates and stabilizes microtubule lattice formed by microtubule minus-end polymerization. Acts on free microtubule minus-ends that are not capped by microtubule-nucleating proteins or other factors and protects microtubule minus-ends from depolymerization. In addition, it also reduces the velocity of microtubule polymerization. Through the microtubule cytoskeleton, also regulates the organization of cellular organelles including the Golgi and the early endosomes. Essential for the tethering, but not for nucleation of non-centrosomal microtubules at the Golgi: together with Golgi-associated proteins AKAP9 and PDE4DIP, required to tether non-centrosomal minus-end microtubules to the Golgi, an important step for polarized cell movement. Also acts as a regulator of neuronal polarity and development: localizes to non-centrosomal microtubule minus-ends in neurons and stabilizes non-centrosomal microtubules, which is required for neuronal polarity, axon specification and dendritic branch formation. Through the microtubule cytoskeleton, regulates the autophagosome transport. The sequence is that of Calmodulin-regulated spectrin-associated protein 2 from Homo sapiens (Human).